Consider the following 1136-residue polypeptide: Probable LRR receptor-like serine/threonine-protein kinase At4g36180 (1136 aa).

The signal sequence occupies residues 1–22; that stretch reads MAMDISLFFIFLVIYAPLVSYA. Over 23 to 751 the chain is Extracellular; sequence DESQAEIDAL…TAEGKKKKRK (729 aa). LRR repeat units lie at residues 93-115, 117-139, 141-162, 163-186, 187-210, 211-233, 235-256, and 259-280; these read MLRKLSLRSNSFNGTIPTSLAYC, RLLSVFLQYNSLSGKLPPAMRNL, SLEVFNVAGNRLSGEIPVGLPS, SLQFLDISSNTFSGQIPSGLANLT, QLQLLNLSYNQLTGEIPASLGNLQ, SLQYLWLDFNLLQGTLPSAISNC, SLVHLSASENEIGGVIPAAYGA, and KLEVLSLSNNNFSGTVPFSLFC. N105 and N138 each carry an N-linked (GlcNAc...) asparagine glycan. N184, N192, and N232 each carry an N-linked (GlcNAc...) asparagine glycan. 2 N-linked (GlcNAc...) asparagine glycosylation sites follow: N269 and N281. LRR repeat units follow at residues 283 to 304, 309 to 330, 333 to 355, 357 to 379, 381 to 403, 405 to 426, 429 to 452, 453 to 479, 480 to 500, 501 to 524, 525 to 546, 549 to 571, 573 to 595, 597 to 620, 621 to 643, 645 to 666, 669 to 691, and 694 to 716; these read SLTIVQLGFNAFSDIVRPETTA, GLQVLDLQENRISGRFPLWLTN, SLKNLDVSGNLFSGEIPPDIGNL, RLEELKLANNSLTGEIPVEIKQC, SLDVLDFEGNSLKGQIPEFLGYM, ALKVLSLGRNSFSGYVPSSMVN, QLERLNLGENNLNGSFPVELMALT, SLSELDLSGNRFSGAVPVSISNLSNLS, FLNLSGNGFSGEIPASVGNLF, KLTALDLSKQNMSGEVPVELSGLP, NVQVIALQGNNFSGVVPEGFSS, SLRYVNLSSNSFSGEIPQTFGFL, LLVSLSLSDNHISGSIPPEIGNC, ALEVLELRSNRLMGHIPADLSRLP, RLKVLDLGQNNLSGEIPPEISQS, SLNSLSLDHNHLSGVIPGSFSG, NLTKMDLSVNNLTGEIPASLALI, and NLVYFNVSSNNLKGEIPASLGSR. The N-linked (GlcNAc...) asparagine glycan is linked to N365. N441, N474, N477, N482, N511, N535, N554, and N594 each carry an N-linked (GlcNAc...) asparagine glycan. N-linked (GlcNAc...) asparagine glycosylation occurs at N631. Residues N669, N679, N699, and N719 are each glycosylated (N-linked (GlcNAc...) asparagine). The helical transmembrane segment at 752–772 threads the bilayer; the sequence is MILMIVMAAIGAFLLSLFCCF. Topologically, residues 773–1136 are cytoplasmic; that stretch reads YVYTLLKWRK…ADPTSQPSPA (364 aa). Positions 786-819 are disordered; sequence QQSTTGEKKRSPGRTSAGSRVRSSTSRSSTENGE. Positions 799-815 are enriched in low complexity; sequence RTSAGSRVRSSTSRSST. A phosphothreonine mark is found at T830 and T838. The 283-residue stretch at 841–1123 folds into the Protein kinase domain; sequence FDEENVLSRT…LEGCRVGPDV (283 aa). Residues Y915 and Y1010 each carry the phosphotyrosine modification.

This sequence belongs to the protein kinase superfamily. Ser/Thr protein kinase family.

The protein resides in the cell membrane. It catalyses the reaction L-seryl-[protein] + ATP = O-phospho-L-seryl-[protein] + ADP + H(+). The catalysed reaction is L-threonyl-[protein] + ATP = O-phospho-L-threonyl-[protein] + ADP + H(+). The polypeptide is Probable LRR receptor-like serine/threonine-protein kinase At4g36180 (Arabidopsis thaliana (Mouse-ear cress)).